The sequence spans 300 residues: Ribosomal RNA small subunit methyltransferase A (300 aa).

Residues Asn36, Val38, Gly63, Glu84, Asp113, and Asn131 each coordinate S-adenosyl-L-methionine.

It belongs to the class I-like SAM-binding methyltransferase superfamily. rRNA adenine N(6)-methyltransferase family. RsmA subfamily.

It localises to the cytoplasm. The enzyme catalyses adenosine(1518)/adenosine(1519) in 16S rRNA + 4 S-adenosyl-L-methionine = N(6)-dimethyladenosine(1518)/N(6)-dimethyladenosine(1519) in 16S rRNA + 4 S-adenosyl-L-homocysteine + 4 H(+). Functionally, specifically dimethylates two adjacent adenosines (A1518 and A1519) in the loop of a conserved hairpin near the 3'-end of 16S rRNA in the 30S particle. May play a critical role in biogenesis of 30S subunits. The protein is Ribosomal RNA small subunit methyltransferase A of Kineococcus radiotolerans (strain ATCC BAA-149 / DSM 14245 / SRS30216).